A 351-amino-acid polypeptide reads, in one-letter code: Nicotinate-nucleotide--dimethylbenzimidazole phosphoribosyltransferase (351 aa).

Glutamate 319 (proton acceptor) is an active-site residue.

Belongs to the CobT family.

It carries out the reaction 5,6-dimethylbenzimidazole + nicotinate beta-D-ribonucleotide = alpha-ribazole 5'-phosphate + nicotinate + H(+). It participates in nucleoside biosynthesis; alpha-ribazole biosynthesis; alpha-ribazole from 5,6-dimethylbenzimidazole: step 1/2. Functionally, catalyzes the synthesis of alpha-ribazole-5'-phosphate from nicotinate mononucleotide (NAMN) and 5,6-dimethylbenzimidazole (DMB). This Desulforamulus reducens (strain ATCC BAA-1160 / DSM 100696 / MI-1) (Desulfotomaculum reducens) protein is Nicotinate-nucleotide--dimethylbenzimidazole phosphoribosyltransferase.